Here is a 379-residue protein sequence, read N- to C-terminus: Alcohol dehydrogenase 3 (379 aa).

Zn(2+) contacts are provided by Cys47, Thr49, His69, Cys99, Cys102, Cys105, Cys113, and Cys177. The an alcohol site is built by Thr49 and His69. Thr49 provides a ligand contact to NAD(+). Residues 202–207 (GLGAVG), Asp226, Lys231, Thr272, Val295, 295–297 (VGV), Phe322, and Arg372 each bind NAD(+).

This sequence belongs to the zinc-containing alcohol dehydrogenase family. As to quaternary structure, homodimer. The cofactor is Zn(2+).

It localises to the cytoplasm. The catalysed reaction is a primary alcohol + NAD(+) = an aldehyde + NADH + H(+). The enzyme catalyses a secondary alcohol + NAD(+) = a ketone + NADH + H(+). This is Alcohol dehydrogenase 3 (ADH3) from Hordeum vulgare (Barley).